The following is a 78-amino-acid chain: Beta-defensin 105A (78 aa).

The N-terminal stretch at 1-27 is a signal peptide; sequence MALIRKTFYFLFAVFFILVQLPSGCQA. 3 disulfides stabilise this stretch: Cys-46-Cys-74, Cys-53-Cys-67, and Cys-57-Cys-73.

Belongs to the beta-defensin family.

It localises to the secreted. Functionally, has antimicrobial activity. The polypeptide is Beta-defensin 105A (DEFB105A) (Hylobates lar (Lar gibbon)).